A 344-amino-acid chain; its full sequence is Outer membrane protein A (344 aa).

At 1-14 the chain is on the periplasmic side; the sequence is MKAIFVLNAAPKDN. A beta stranded transmembrane segment spans residues 15-24; sequence TWYAGGKLGW. Residues 25–49 are Extracellular-facing; that stretch reads SQYHDTGFYGNGFQNNNGPTRNDQL. Residues 50–59 traverse the membrane as a beta stranded segment; that stretch reads GAGAFGGYQV. Residues 60–62 lie on the Periplasmic side of the membrane; sequence NPY. A beta stranded membrane pass occupies residues 63–71; the sequence is LGFEMGYDW. Over 72–89 the chain is Extracellular; it reads LGRMAYKGSVDNGAFKAQ. The beta stranded transmembrane segment at 90–100 threads the bilayer; the sequence is GVQLTAKLGYP. The Periplasmic segment spans residues 101 to 104; it reads ITDD. The beta stranded transmembrane segment at 105–114 threads the bilayer; it reads LDIYTRLGGM. The Extracellular portion of the chain corresponds to 115–139; the sequence is VWRADSKGNYASTGVSRSEHDTGVS. A beta stranded membrane pass occupies residues 140-149; it reads PVFAGGVEWA. The Periplasmic segment spans residues 150 to 153; that stretch reads VTRD. Residues 154–162 traverse the membrane as a beta stranded segment; sequence IATRLEYQW. Over 163–179 the chain is Extracellular; the sequence is VNNIGDAGTVGTRPDNG. Residues 180-188 form a beta stranded membrane-spanning segment; that stretch reads MLSLGVSYR. The Periplasmic portion of the chain corresponds to 189 to 344; that stretch reads FGQEDAAPVV…YKEVVTQPQA (156 aa). Repeat copies occupy residues 199–200, 201–202, 203–204, and 205–206. The tract at residues 199-206 is 4 X 2 AA tandem repeats of A-P; it reads APAPAPAP. An OmpA-like domain is found at 208–336; the sequence is VATKHFTLKS…RVEIEVKGYK (129 aa). A disulfide bond links C309 and C321.

This sequence belongs to the outer membrane OOP (TC 1.B.6) superfamily. OmpA family. As to quaternary structure, monomer and homodimer.

The protein resides in the cell outer membrane. With TolR probably plays a role in maintaining the position of the peptidoglycan cell wall in the periplasm. Acts as a porin with low permeability that allows slow penetration of small solutes; an internal gate slows down solute passage. Functionally, required for conjugation with F-type plasmids; probably serves as the mating receptor on recipient cells. In Klebsiella pneumoniae, this protein is Outer membrane protein A.